Consider the following 182-residue polypeptide: MKNNQRPVIRSTTVIGVIRDGKAALGSDGQMTLGNTVIKHSTRKIRRLYHGKLVAGFAGATADAVTLLDRFEEKLEAYNGKLDRAAVELARDWRTDKYLRRLEAMLAIVSHDKALIISGTGDVIEPEDGIVAIGSGSMYALAAARSLMKHSSLPAKEIVLESLKIAADICIYTNDHIIVEEV.

Thr-12 is a catalytic residue. Residues Ala-167, Cys-170, and Thr-173 each contribute to the Na(+) site.

This sequence belongs to the peptidase T1B family. HslV subfamily. A double ring-shaped homohexamer of HslV is capped on each side by a ring-shaped HslU homohexamer. The assembly of the HslU/HslV complex is dependent on binding of ATP.

The protein localises to the cytoplasm. The enzyme catalyses ATP-dependent cleavage of peptide bonds with broad specificity.. Its activity is regulated as follows. Allosterically activated by HslU binding. In terms of biological role, protease subunit of a proteasome-like degradation complex believed to be a general protein degrading machinery. This is ATP-dependent protease subunit HslV from Pelodictyon phaeoclathratiforme (strain DSM 5477 / BU-1).